Reading from the N-terminus, the 145-residue chain is Large ribosomal subunit protein uL13 (145 aa).

It belongs to the universal ribosomal protein uL13 family. As to quaternary structure, part of the 50S ribosomal subunit.

This protein is one of the early assembly proteins of the 50S ribosomal subunit, although it is not seen to bind rRNA by itself. It is important during the early stages of 50S assembly. The protein is Large ribosomal subunit protein uL13 of Staphylococcus haemolyticus (strain JCSC1435).